Consider the following 77-residue polypeptide: U8-lycotoxin-Ls1q (77 aa).

Positions 1 to 20 (MKLMIFAGLVLFAIVSLIEA) are cleaved as a signal peptide. Positions 21 to 26 (QAEHEK) are excised as a propeptide.

The protein belongs to the neurotoxin 19 (CSTX) family. 08 (U8-Lctx) subfamily. Post-translationally, contains 4 disulfide bonds. Expressed by the venom gland.

The protein localises to the secreted. In Lycosa singoriensis (Wolf spider), this protein is U8-lycotoxin-Ls1q.